Here is a 207-residue protein sequence, read N- to C-terminus: Cytochrome c biogenesis ATP-binding export protein CcmA (207 aa).

An ABC transporter domain is found at 4-207 (LEARELLCER…RISLTQTGAA (204 aa)). 36-43 (GSNGAGKT) lines the ATP pocket.

It belongs to the ABC transporter superfamily. CcmA exporter (TC 3.A.1.107) family. The complex is composed of two ATP-binding proteins (CcmA) and two transmembrane proteins (CcmB).

It is found in the cell inner membrane. It catalyses the reaction heme b(in) + ATP + H2O = heme b(out) + ADP + phosphate + H(+). In terms of biological role, part of the ABC transporter complex CcmAB involved in the biogenesis of c-type cytochromes; once thought to export heme, this seems not to be the case, but its exact role is uncertain. Responsible for energy coupling to the transport system. In Escherichia coli (strain UTI89 / UPEC), this protein is Cytochrome c biogenesis ATP-binding export protein CcmA.